Here is a 144-residue protein sequence, read N- to C-terminus: UPF0735 ACT domain-containing protein LCABL_12100 (144 aa).

The 76-residue stretch at 68–143 folds into the ACT domain; sequence VISLMLHHDR…GVSDVHLVSV (76 aa).

It belongs to the UPF0735 family.

The chain is UPF0735 ACT domain-containing protein LCABL_12100 from Lacticaseibacillus casei (strain BL23) (Lactobacillus casei).